The primary structure comprises 305 residues: Ribosomal protein L11 methyltransferase (305 aa).

Threonine 155, glycine 176, aspartate 198, and asparagine 241 together coordinate S-adenosyl-L-methionine.

This sequence belongs to the methyltransferase superfamily. PrmA family.

It localises to the cytoplasm. The catalysed reaction is L-lysyl-[protein] + 3 S-adenosyl-L-methionine = N(6),N(6),N(6)-trimethyl-L-lysyl-[protein] + 3 S-adenosyl-L-homocysteine + 3 H(+). Functionally, methylates ribosomal protein L11. This chain is Ribosomal protein L11 methyltransferase, found in Carboxydothermus hydrogenoformans (strain ATCC BAA-161 / DSM 6008 / Z-2901).